The chain runs to 138 residues: Thyrotropin subunit beta (138 aa).

The N-terminal stretch at 1–20 is a signal peptide; sequence MTAIFLMSMVFGLACGQTMS. Intrachain disulfides connect cysteine 22–cysteine 72, cysteine 36–cysteine 87, cysteine 39–cysteine 125, cysteine 47–cysteine 103, cysteine 51–cysteine 105, and cysteine 108–cysteine 115. The N-linked (GlcNAc...) asparagine glycan is linked to asparagine 43. The propeptide occupies 133 to 138; it reads VVEFSI.

It belongs to the glycoprotein hormones subunit beta family. As to quaternary structure, heterodimer of a common alpha chain and a unique beta chain which confers biological specificity to thyrotropin, lutropin, follitropin and gonadotropin.

The protein resides in the secreted. Its function is as follows. Indispensable for the control of thyroid structure and metabolism. This chain is Thyrotropin subunit beta (TSHB), found in Equus caballus (Horse).